The primary structure comprises 104 residues: Large ribosomal subunit protein cL38 (104 aa).

The transit peptide at 1–39 (MASVSSIFGCGVSMAPNSSLRNKAIRTERRSACGGLLIE) directs the protein to the chloroplast. Positions 42–76 (SRPQKKSTAHHMKTRPRKSRLSDRNRKPTVYAPLP) are disordered. Residues 44-60 (PQKKSTAHHMKTRPRKS) show a composition bias toward basic residues.

This sequence belongs to the chloroplast-specific ribosomal protein cL38 family. Part of the 50S ribosomal subunit.

The protein localises to the plastid. Its subcellular location is the chloroplast. This Pisum sativum (Garden pea) protein is Large ribosomal subunit protein cL38 (PSRP6).